Here is a 66-residue protein sequence, read N- to C-terminus: Beta-toxin Cb3 (66 aa).

Positions 1 to 66 constitute an LCN-type CS-alpha/beta domain; that stretch reads KEGYIVNYYD…VWPLPNKTCL (66 aa). 4 disulfide bridges follow: Cys-12–Cys-65, Cys-16–Cys-41, Cys-25–Cys-46, and Cys-29–Cys-48.

Belongs to the long (4 C-C) scorpion toxin superfamily. Sodium channel inhibitor family. Beta subfamily. In terms of tissue distribution, expressed by the venom gland.

It is found in the secreted. Its function is as follows. Beta toxins bind voltage-independently at site-4 of sodium channels (Nav) and reduces peak current and shifts the voltage of activation toward more negative potentials thereby affecting sodium channel activation and promoting spontaneous and repetitive firing. Has an inhibitory effect on voltage-gated sodium channels hNav1.1/SCN1A, hNav1.2/SCN2A, hNav1.4/SCN4A and hNav1.6/SCN8A. Reduces the peak current of hNav1.5/SCN5A but does not shift its voltage of activation. Also affects the inactivation processes of hNav1.1/SCN1A, hNav1.4/SCN4A, hNav1.5/SCN5A and hNav1.6/SCN8A. This toxin is active against mammals and lethal to mice. This chain is Beta-toxin Cb3, found in Centruroides baergi (Scorpion).